The primary structure comprises 124 residues: MAIAKEDILAAVEGMTVLELNELVKAFEEKFGVSAAAVAVAGPAGGGAAAAAEEKTEFTVVLAEAGANKVSVIKAVRELTGLGLKEAKDLVDGAPKPVKEGVDKAAAEEAKKKLEEAGAKVEVK.

It belongs to the bacterial ribosomal protein bL12 family. Homodimer. Part of the ribosomal stalk of the 50S ribosomal subunit. Forms a multimeric L10(L12)X complex, where L10 forms an elongated spine to which 2 to 4 L12 dimers bind in a sequential fashion. Binds GTP-bound translation factors.

In terms of biological role, forms part of the ribosomal stalk which helps the ribosome interact with GTP-bound translation factors. Is thus essential for accurate translation. The sequence is that of Large ribosomal subunit protein bL12 from Burkholderia cenocepacia (strain HI2424).